A 316-amino-acid polypeptide reads, in one-letter code: tRNA selenocysteine 1-associated protein 1-like (316 aa).

2 consecutive RRM domains span residues 6–89 (TSLW…YATY) and 99–178 (FSVF…IAVN). Positions 239–248 (PPMGMPPMPP) are enriched in pro residues. A disordered region spans residues 239 to 285 (PPMGMPPMPPDMQGSTEAHDGTEEVEEDPSEDPNPQVDVEELNRQYM).

The protein belongs to the RRM TRSPAP family.

The protein localises to the nucleus. It localises to the cytoplasm. Functionally, involved in the early steps of selenocysteine biosynthesis and tRNA(Sec) charging to the later steps resulting in the cotranslational incorporation of selenocysteine into selenoproteins. In Danio rerio (Zebrafish), this protein is tRNA selenocysteine 1-associated protein 1-like (trnau1apl).